A 224-amino-acid chain; its full sequence is UPF0758 protein Tbd_2588 (224 aa).

Positions 102–224 constitute an MPN domain; sequence ALSSPAAVRD…ALSFAEAGHL (123 aa). Zn(2+) contacts are provided by His173, His175, and Asp186. A JAMM motif motif is present at residues 173–186; that stretch reads HNHPSGVNEPSQAD.

It belongs to the UPF0758 family.

This Thiobacillus denitrificans (strain ATCC 25259 / T1) protein is UPF0758 protein Tbd_2588.